Here is a 399-residue protein sequence, read N- to C-terminus: Glutathione S-transferase LANCL1 (399 aa).

Position 2 is an N-acetylalanine (alanine 2). An N6-acetyllysine modification is found at lysine 142. Position 276 (cysteine 276) interacts with Zn(2+). Lysine 317 provides a ligand contact to glutathione. Cysteine 322 and histidine 323 together coordinate Zn(2+). 364-367 (RTPD) is a glutathione binding site.

The protein belongs to the LanC-like protein family. Interacts with the C-terminal of STOM. Interacts with the EPS8 SH3 domain. Interaction with EPS8 is inhibited by glutathione binding. As to quaternary structure, (Microbial infection) Interacts with P.falciparum SBP1. Detected in erythrocytes, brain, kidney, testis, ovary, heart, lung, placenta and spleen (at protein level). Ubiquitous. Strongly expressed in brain, spinal cord, pituitary gland, kidney, heart, skeletal muscle, pancreas, ovary and testis.

The protein resides in the cytoplasm. Its subcellular location is the cell membrane. It catalyses the reaction RX + glutathione = an S-substituted glutathione + a halide anion + H(+). It carries out the reaction 1-chloro-2,4-dinitrobenzene + glutathione = 2,4-dinitrophenyl-S-glutathione + chloride + H(+). In terms of biological role, functions as a glutathione transferase. Catalyzes conjugation of the glutathione (GSH) to artificial substrates 1-chloro-2,4-dinitrobenzene (CDNB) and p-nitrophenyl acetate. Mitigates neuronal oxidative stress during normal postnatal development and in response to oxidative stresses probably through GSH antioxidant defense mechanism. May play a role in EPS8 signaling. Binds glutathione. The polypeptide is Glutathione S-transferase LANCL1 (Homo sapiens (Human)).